A 344-amino-acid polypeptide reads, in one-letter code: Dihydroorotase (344 aa).

The Zn(2+) site is built by His-13 and His-15. Residues 15-17 (HLR) and Asn-41 contribute to the substrate site. Zn(2+)-binding residues include Lys-98, His-135, and His-173. Lys-98 is subject to N6-carboxylysine. Substrate is bound at residue His-135. Residue Leu-218 participates in substrate binding. Position 247 (Asp-247) interacts with Zn(2+). The active site involves Asp-247. Residues His-251 and Ala-263 each contribute to the substrate site.

It belongs to the metallo-dependent hydrolases superfamily. DHOase family. Class II DHOase subfamily. In terms of assembly, homodimer. Zn(2+) serves as cofactor.

It catalyses the reaction (S)-dihydroorotate + H2O = N-carbamoyl-L-aspartate + H(+). Its pathway is pyrimidine metabolism; UMP biosynthesis via de novo pathway; (S)-dihydroorotate from bicarbonate: step 3/3. In terms of biological role, catalyzes the reversible cyclization of carbamoyl aspartate to dihydroorotate. The protein is Dihydroorotase of Neisseria meningitidis serogroup C / serotype 2a (strain ATCC 700532 / DSM 15464 / FAM18).